We begin with the raw amino-acid sequence, 228 residues long: MTGNQMFCRENELDESFKQLASYINIPVGVLLPFKSQCFVRHYNKGQIVYYSSDETTHIYLLLKGNIMRENFNLNGDVYRYLNREKVLFPLNNLFQDKVPNEMCTALTDCEMIGIPRDLIEYLCKNHEEIFVKLFSLLSETQCQHIEYNMALTSKLAKERVTKILRYLCQTVGYDHDEFYEIKHFMTIQLLSDMAGISRETTSHIINELREEKILFKNSKNWLVSKDL.

22–141 (SYINIPVGVL…VKLFSLLSET (120 aa)) lines the a nucleoside 3',5'-cyclic phosphate pocket. Residues 155 to 228 (KLAKERVTKI…SKNWLVSKDL (74 aa)) enclose the HTH crp-type domain. The H-T-H motif DNA-binding region spans 188-207 (IQLLSDMAGISRETTSHIIN).

The protein resides in the cytoplasm. Positively regulates the expression of the arcABDCR operon under anaerobic conditions, thus playing an essential role in arginine catabolism. May also control the expression of genes encoding proteins which are involved in anaerobic metabolism. Can bind cyclic AMP. The protein is HTH-type transcriptional regulator ArcR (arcR) of Staphylococcus epidermidis (strain ATCC 12228 / FDA PCI 1200).